A 149-amino-acid chain; its full sequence is MLKLWLICILTVSVVSIQSLSLLEETNYVSDCLASNNISQAEFQELIDRNSSEEDDLENTDRRYKCFIHCLAEKGNLLDTNGYLDVDKIDQIEPVSDELREILYDCKKIYDEEEDHCEYAFKMVTCLTESFEQSDEVTEAGKNTNKLNE.

The N-terminal stretch at 1-16 is a signal peptide; it reads MLKLWLICILTVSVVS. Cystine bridges form between Cys32–Cys70, Cys66–Cys117, and Cys106–Cys126.

Belongs to the PBP/GOBP family.

Present in the aqueous fluid surrounding olfactory sensory dendrites and are thought to aid in the capture and transport of hydrophobic odorants into and through this fluid. The polypeptide is General odorant-binding protein 57c (Drosophila melanogaster (Fruit fly)).